Consider the following 185-residue polypeptide: Putative RNA (cytidine(34)-2'-O)-methyltransferase (185 aa).

3 residues coordinate S-adenosyl-L-methionine: isoleucine 80, glycine 105, and isoleucine 126.

It belongs to the class IV-like SAM-binding methyltransferase superfamily. RNA methyltransferase TrmH family. TrmL subfamily.

The protein localises to the cytoplasm. The enzyme catalyses cytidine(34) in tRNA + S-adenosyl-L-methionine = 2'-O-methylcytidine(34) in tRNA + S-adenosyl-L-homocysteine + H(+). It catalyses the reaction 5-carboxymethylaminomethyluridine(34) in tRNA(Leu) + S-adenosyl-L-methionine = 5-carboxymethylaminomethyl-2'-O-methyluridine(34) in tRNA(Leu) + S-adenosyl-L-homocysteine + H(+). Functionally, could methylate the ribose at the nucleotide 34 wobble position in tRNA. The sequence is that of Putative RNA (cytidine(34)-2'-O)-methyltransferase from Lactobacillus gasseri (strain ATCC 33323 / DSM 20243 / BCRC 14619 / CIP 102991 / JCM 1131 / KCTC 3163 / NCIMB 11718 / NCTC 13722 / AM63).